The sequence spans 424 residues: Argininosuccinate synthase (424 aa).

ATP contacts are provided by residues 9–17 (AYSGGLDTS) and Ala35. L-citrulline contacts are provided by Tyr86 and Ser91. 114 to 122 (SHGATGKGN) provides a ligand contact to ATP. The L-aspartate site is built by Thr118, Asn122, and Asp123. Asn122 is a binding site for L-citrulline. L-citrulline-binding residues include Arg126, Ser179, Ser188, Glu269, and Tyr281.

It belongs to the argininosuccinate synthase family. Homotetramer.

It carries out the reaction L-citrulline + L-aspartate + ATP = 2-(N(omega)-L-arginino)succinate + AMP + diphosphate + H(+). It participates in amino-acid biosynthesis; L-arginine biosynthesis; L-arginine from L-ornithine and carbamoyl phosphate: step 2/3. Its pathway is nitrogen metabolism; urea cycle; (N(omega)-L-arginino)succinate from L-aspartate and L-citrulline: step 1/1. In Anopheles gambiae (African malaria mosquito), this protein is Argininosuccinate synthase.